The sequence spans 179 residues: MAKLHDFYRESVVPELMKEFSYNSVMQVPRIDKITLNMGVGEALADKKVLDNAVADLEAISGQKPIRTVARKSVAGFKVREGFPIGCKVTLRGERMWDFLQRLISIAIPRIRDFRGLNPKSFDGRGNYSMGVREQIIFPEVDYDKVDKVRGLDITITTNAGTDDEARALLAAFNFPFRK.

It belongs to the universal ribosomal protein uL5 family. In terms of assembly, part of the 50S ribosomal subunit; part of the 5S rRNA/L5/L18/L25 subcomplex. Contacts the 5S rRNA and the P site tRNA. Forms a bridge to the 30S subunit in the 70S ribosome.

Its function is as follows. This is one of the proteins that bind and probably mediate the attachment of the 5S RNA into the large ribosomal subunit, where it forms part of the central protuberance. In the 70S ribosome it contacts protein S13 of the 30S subunit (bridge B1b), connecting the 2 subunits; this bridge is implicated in subunit movement. Contacts the P site tRNA; the 5S rRNA and some of its associated proteins might help stabilize positioning of ribosome-bound tRNAs. This chain is Large ribosomal subunit protein uL5, found in Idiomarina loihiensis (strain ATCC BAA-735 / DSM 15497 / L2-TR).